We begin with the raw amino-acid sequence, 273 residues long: Pantothenate synthetase (273 aa).

27–34 (MGALHEGH) lines the ATP pocket. Histidine 34 (proton donor) is an active-site residue. Glutamine 58 contacts (R)-pantoate. Glutamine 58 lines the beta-alanine pocket. 144–147 (GKKD) is an ATP binding site. Position 150 (glutamine 150) interacts with (R)-pantoate. ATP-binding positions include valine 173 and 181-184 (LSSR).

The protein belongs to the pantothenate synthetase family. Homodimer.

It localises to the cytoplasm. It carries out the reaction (R)-pantoate + beta-alanine + ATP = (R)-pantothenate + AMP + diphosphate + H(+). Its pathway is cofactor biosynthesis; (R)-pantothenate biosynthesis; (R)-pantothenate from (R)-pantoate and beta-alanine: step 1/1. Its function is as follows. Catalyzes the condensation of pantoate with beta-alanine in an ATP-dependent reaction via a pantoyl-adenylate intermediate. This is Pantothenate synthetase from Sulfurimonas denitrificans (strain ATCC 33889 / DSM 1251) (Thiomicrospira denitrificans (strain ATCC 33889 / DSM 1251)).